The primary structure comprises 130 residues: Prefoldin subunit alpha (130 aa).

It belongs to the prefoldin subunit alpha family. Heterohexamer of two alpha and four beta subunits.

It localises to the cytoplasm. In terms of biological role, molecular chaperone capable of stabilizing a range of proteins. Seems to fulfill an ATP-independent, HSP70-like function in archaeal de novo protein folding. This Thermoplasma acidophilum (strain ATCC 25905 / DSM 1728 / JCM 9062 / NBRC 15155 / AMRC-C165) protein is Prefoldin subunit alpha (pfdA).